A 236-amino-acid polypeptide reads, in one-letter code: Sugar fermentation stimulation protein homolog (236 aa).

The protein belongs to the SfsA family.

This Methylobacterium nodulans (strain LMG 21967 / CNCM I-2342 / ORS 2060) protein is Sugar fermentation stimulation protein homolog.